The following is a 186-amino-acid chain: Elongation factor P (186 aa).

The protein belongs to the elongation factor P family.

Its subcellular location is the cytoplasm. Its pathway is protein biosynthesis; polypeptide chain elongation. Involved in peptide bond synthesis. Stimulates efficient translation and peptide-bond synthesis on native or reconstituted 70S ribosomes in vitro. Probably functions indirectly by altering the affinity of the ribosome for aminoacyl-tRNA, thus increasing their reactivity as acceptors for peptidyl transferase. The protein is Elongation factor P of Polynucleobacter necessarius subsp. necessarius (strain STIR1).